The primary structure comprises 309 residues: PI-PLC X domain-containing protein 1 (309 aa).

Residues 17–193 (HMWDIPLWNL…QVILSYDDES (177 aa)) enclose the PI-PLC X-box domain.

This Danio rerio (Zebrafish) protein is PI-PLC X domain-containing protein 1 (plcxd1).